The following is a 169-amino-acid chain: Crossover junction endodeoxyribonuclease RuvC (169 aa).

Catalysis depends on residues D11, E71, and D143. Mg(2+)-binding residues include D11, E71, and D143.

The protein belongs to the RuvC family. As to quaternary structure, homodimer which binds Holliday junction (HJ) DNA. The HJ becomes 2-fold symmetrical on binding to RuvC with unstacked arms; it has a different conformation from HJ DNA in complex with RuvA. In the full resolvosome a probable DNA-RuvA(4)-RuvB(12)-RuvC(2) complex forms which resolves the HJ. It depends on Mg(2+) as a cofactor.

The protein resides in the cytoplasm. The catalysed reaction is Endonucleolytic cleavage at a junction such as a reciprocal single-stranded crossover between two homologous DNA duplexes (Holliday junction).. In terms of biological role, the RuvA-RuvB-RuvC complex processes Holliday junction (HJ) DNA during genetic recombination and DNA repair. Endonuclease that resolves HJ intermediates. Cleaves cruciform DNA by making single-stranded nicks across the HJ at symmetrical positions within the homologous arms, yielding a 5'-phosphate and a 3'-hydroxyl group; requires a central core of homology in the junction. The consensus cleavage sequence is 5'-(A/T)TT(C/G)-3'. Cleavage occurs on the 3'-side of the TT dinucleotide at the point of strand exchange. HJ branch migration catalyzed by RuvA-RuvB allows RuvC to scan DNA until it finds its consensus sequence, where it cleaves and resolves the cruciform DNA. This is Crossover junction endodeoxyribonuclease RuvC from Bartonella quintana (strain Toulouse) (Rochalimaea quintana).